Reading from the N-terminus, the 201-residue chain is MKLLHIDSSIAGVGSVTRELSAEIVALLKGADKSWNVIYRDLVAEPLSHLTGGYLAALQGAPADQAVQADVGAGLAVMEDFLAADVIVIGAPMYNFGVPSQLKAWIDRLAVPGKTFSYGEHGPVGLCKGKKVIVASARGGIFSAGSPLAALDHQENYLLSFFGFLGIAEISFVRAEGVALGPVVRAKAIAAAKEHAAKLAA.

FMN-binding positions include serine 9 and 93 to 96 (MYNF).

Belongs to the azoreductase type 1 family. Homodimer. FMN is required as a cofactor.

The enzyme catalyses 2 a quinone + NADH + H(+) = 2 a 1,4-benzosemiquinone + NAD(+). It carries out the reaction N,N-dimethyl-1,4-phenylenediamine + anthranilate + 2 NAD(+) = 2-(4-dimethylaminophenyl)diazenylbenzoate + 2 NADH + 2 H(+). Quinone reductase that provides resistance to thiol-specific stress caused by electrophilic quinones. In terms of biological role, also exhibits azoreductase activity. Catalyzes the reductive cleavage of the azo bond in aromatic azo compounds to the corresponding amines. This Bradyrhizobium sp. (strain BTAi1 / ATCC BAA-1182) protein is FMN-dependent NADH:quinone oxidoreductase.